A 406-amino-acid chain; its full sequence is Cysteine desulfurase (406 aa).

Position 226 is an N6-(pyridoxal phosphate)lysine (K226). Catalysis depends on C364, which acts as the Cysteine persulfide intermediate.

Belongs to the class-V pyridoxal-phosphate-dependent aminotransferase family. Csd subfamily. As to quaternary structure, homodimer. Interacts with SufE and the SufBCD complex composed of SufB, SufC and SufD. The interaction with SufE is required to mediate the direct transfer of the sulfur atom from the S-sulfanylcysteine. Requires pyridoxal 5'-phosphate as cofactor.

It is found in the cytoplasm. It carries out the reaction (sulfur carrier)-H + L-cysteine = (sulfur carrier)-SH + L-alanine. The enzyme catalyses L-selenocysteine + AH2 = hydrogenselenide + L-alanine + A + H(+). It functions in the pathway cofactor biosynthesis; iron-sulfur cluster biosynthesis. Cysteine desulfurases mobilize the sulfur from L-cysteine to yield L-alanine, an essential step in sulfur metabolism for biosynthesis of a variety of sulfur-containing biomolecules. Component of the suf operon, which is activated and required under specific conditions such as oxidative stress and iron limitation. Acts as a potent selenocysteine lyase in vitro, that mobilizes selenium from L-selenocysteine. Selenocysteine lyase activity is however unsure in vivo. The sequence is that of Cysteine desulfurase from Escherichia coli (strain K12 / MC4100 / BW2952).